Here is an 85-residue protein sequence, read N- to C-terminus: Large ribosomal subunit protein bL27 (85 aa).

The segment covering 1–11 (MASKASGGSTR) has biased composition (polar residues). Residues 1–20 (MASKASGGSTRNGRDSISKR) are disordered.

Belongs to the bacterial ribosomal protein bL27 family.

The protein is Large ribosomal subunit protein bL27 of Sulfurihydrogenibium sp. (strain YO3AOP1).